Reading from the N-terminus, the 366-residue chain is Growth hormone secretagogue receptor type 1 (366 aa).

At 1-40 (MWNATPSEEPGFNLTLADLDWDASPGNDSLGDELLQLFPA) the chain is on the extracellular side. N-linked (GlcNAc...) asparagine glycans are attached at residues Asn13 and Asn27. A helical membrane pass occupies residues 41–66 (PLLAGVTATCVALFVVGIAGNLLTML). Over 67–72 (VVSRFR) the chain is Cytoplasmic. Residues 73 to 96 (ELRTTTNLYLSSMAFSDLLIFLCM) traverse the membrane as a helical segment. The Extracellular segment spans residues 97 to 117 (PLDLVRLWQYRPWNFGDLLCK). An intrachain disulfide couples Cys116 to Cys198. The chain crosses the membrane as a helical span at residues 118–139 (LFQFVSESCTYATVLTITALSV). At 140-162 (ERYFAICFPLRAKVVVTKGRVKL) the chain is on the cytoplasmic side. A helical transmembrane segment spans residues 163-183 (VIFVIWAVAFCSAGPIFVLVG). Residues 184-211 (VEHENGTDPWDTNECRPTEFAVRSGLLT) are Extracellular-facing. A helical transmembrane segment spans residues 212 to 235 (VMVWVSSIFFFLPVFCLTVLYSLI). The Cytoplasmic segment spans residues 236–263 (GRKLWRRRRGDAVVGASLRDQNHKQTVK). Residues 264-285 (MLAVVVFAFILCWLPFHVGRYL) form a helical membrane-spanning segment. The Extracellular segment spans residues 286–302 (FSKSFEPGSLEIAQISQ). Residues 303-326 (YCNLVSFVLFYLSAAINPILYNIM) traverse the membrane as a helical segment. The Cytoplasmic segment spans residues 327-366 (SKKYRVAVFRLLGFEPFSQRKLSTLKDESSRAWTESSINT).

Belongs to the G-protein coupled receptor 1 family. In terms of tissue distribution, pituitary and hypothalamus.

Its subcellular location is the cell membrane. Its function is as follows. Receptor for ghrelin, coupled to G-alpha-11 proteins. Stimulates growth hormone secretion. Also binds other growth hormone releasing peptides (GHRP) (e.g. Met-enkephalin and GHRP-6) as well as non-peptide, low molecular weight secretagogues (e.g. L-692,429, MK-0677, adenosine). This is Growth hormone secretagogue receptor type 1 (GHSR) from Homo sapiens (Human).